The sequence spans 1480 residues: C-type mannose receptor 2 (1480 aa).

An N-terminal signal peptide occupies residues 1 to 30 (MGPIRPALAPWPRHLLRCVLLLGGLRLGHP). Topologically, residues 31 to 1413 (ADSAAALLEP…SAALPENPVA (1383 aa)) are extracellular. The region spanning 40-166 (PDVFLIFSQG…WNIYGSEEDL (127 aa)) is the Ricin B-type lectin domain. Intrachain disulfides connect C53-C67 and C92-C111. 2 N-linked (GlcNAc...) asparagine glycosylation sites follow: N101 and N139. Positions 181–229 (SHGKPCTIPFKYDNQWFHGCTSTGREDGHLWCATTQDYGKDERWGFCPI) constitute a Fibronectin type-II domain. 4 cysteine pairs are disulfide-bonded: C186–C212, C200–C227, C265–C358, and C334–C350. The C-type lectin 1 domain maps to 243-359 (LTDSCYQFNF…CSIALPYVCK (117 aa)). N-linked (GlcNAc...) asparagine glycosylation occurs at N363. 7 consecutive C-type lectin domains span residues 388 to 504 (FQGH…SICK), 527 to 643 (HSPS…RYIC), 677 to 808 (KLRH…WICK), 831 to 950 (FQEA…YICK), 978 to 1106 (FLNK…GFIC), 1131 to 1242 (YLNR…GAVC), and 1271 to 1391 (FREH…GVVC). 7 disulfide bridges follow: C409–C503, C480–C495, C617–C634, C703–C807, C784–C799, C852–C949, and C926–C941. N-linked (GlcNAc...) asparagine glycosylation is present at N1028. C1077 and C1097 are disulfide-bonded. K1141 participates in a covalent cross-link: Glycyl lysine isopeptide (Lys-Gly) (interchain with G-Cter in SUMO1). C1219 and C1233 are oxidised to a cystine. Residue N1348 is glycosylated (N-linked (GlcNAc...) asparagine). A disulfide bridge links C1367 with C1382. A helical membrane pass occupies residues 1414–1434 (LVVVLTAAVLLLLALLTGALI). The Cytoplasmic portion of the chain corresponds to 1435 to 1480 (LYRRRQSAERGSFEGARYSRSSRSGPAEATEKNILVSDMEMNEQQE). The disordered stretch occupies residues 1446 to 1480 (SFEGARYSRSSRSGPAEATEKNILVSDMEMNEQQE).

In terms of assembly, interacts directly with PLAUR/UPAR and PLAU/pro-UPA to form a tri-molecular complex. Interacts with collagen V. Interacts with C-terminal region of type I collagen/COL1A1. N-glycosylated. Post-translationally, phosphorylated.

It localises to the cell membrane. May play a role as endocytotic lectin receptor displaying calcium-dependent lectin activity. Internalizes glycosylated ligands from the extracellular space for release in an endosomal compartment via clathrin-mediated endocytosis. May be involved in plasminogen activation system controlling the extracellular level of PLAUR/PLAU, and thus may regulate protease activity at the cell surface. May contribute to cellular uptake, remodeling and degradation of extracellular collagen matrices. May participate in remodeling of extracellular matrix cooperating with the matrix metalloproteinases (MMPs) secreted by hepatic stellate cells. May mediate endocytosis of partially degraded collagens and glycoproteins produced in the extracellular matrix by MMPs. The chain is C-type mannose receptor 2 (Mrc2) from Rattus norvegicus (Rat).